Consider the following 283-residue polypeptide: MSAYTHPMERELSGLSSRGNSELGSRYSIESGCYMTSLAASIFIASLVTFGVLMITLLIALSTMLQSCENRNIAIVEAQRLDESFGYCKILSLHSQLNSLDEESELPLLCRDVALHRIKQGIYLRELNFTIQMALTYFQTIKPMNDNCDVVVIDIDDTNLLEQDSYYMKYIEEAKHQKSILILALYSKLRSQGYSMVLLSRRPETERNATIEQLKSRGYSDWSHLIMSREDTRQKEELERGHRVIGVIGNHMDVLRGQWNWQSKRLFKLPSLTYDDVLDYNER.

The disordered stretch occupies residues 1-21 (MSAYTHPMERELSGLSSRGNS). A helical transmembrane segment spans residues 41–61 (SIFIASLVTFGVLMITLLIAL).

It belongs to the APS1/VSP family.

It is found in the membrane. This is an uncharacterized protein from Arabidopsis thaliana (Mouse-ear cress).